A 265-amino-acid chain; its full sequence is Aquaporin-5 (265 aa).

Topologically, residues Met-1–Lys-12 are cytoplasmic. Residues Ala-13–Leu-33 form a helical membrane-spanning segment. Over Lys-34–Leu-39 the chain is Extracellular. Residues Pro-40–Leu-60 form a helical membrane-spanning segment. The Cytoplasmic segment spans residues Gly-61 to Gly-65. The segment at residues Gly-66–Leu-74 is an intramembrane region (discontinuously helical). An NPA 1 motif is present at residues Asn-69–Ala-71. At Ala-75–Ala-87 the chain is on the cytoplasmic side. The helical transmembrane segment at Phe-88–Val-108 threads the bilayer. At Ala-109 to Thr-126 the chain is on the extracellular side. N-linked (GlcNAc...) asparagine glycosylation is found at Asn-124 and Asn-125. The helical transmembrane segment at Thr-127 to Phe-147 threads the bilayer. At Ala-148 to Val-158 the chain is on the cytoplasmic side. The helical transmembrane segment at Gly-159–Phe-179 threads the bilayer. Residue Thr-180 is a topological domain, extracellular. The discontinuously helical intramembrane region spans Gly-181–Gly-191. The short motif at Asn-185–Ala-187 is the NPA 2 element. Residues Pro-192–His-203 lie on the Extracellular side of the membrane. A helical membrane pass occupies residues Trp-204–Leu-224. The Cytoplasmic segment spans residues Leu-225–Arg-265.

It belongs to the MIP/aquaporin (TC 1.A.8) family. As to quaternary structure, homotetramer; each monomer provides an independent water pore. Interacts with TRPV4; the interaction is probably indirect and regulates TRPV4 activation by hypotonicity. Detected in skin eccrine sweat glands, at the apical cell membrane and at intercellular canaliculi (at protein level).

Its subcellular location is the apical cell membrane. It localises to the cell membrane. The protein resides in the cytoplasmic vesicle membrane. It carries out the reaction H2O(in) = H2O(out). Its function is as follows. Aquaporins form homotetrameric transmembrane channels, with each monomer independently mediating water transport across the plasma membrane along its osmotic gradient. Plays an important role in fluid secretion in salivary glands. Required for TRPV4 activation by hypotonicity. Together with TRPV4, controls regulatory volume decrease in salivary epithelial cells. Seems to play a redundant role in water transport in the eye, lung and in sweat glands. The chain is Aquaporin-5 from Homo sapiens (Human).